The sequence spans 248 residues: tRNA pseudouridine synthase A (248 aa).

The active-site Nucleophile is the D52. Y111 provides a ligand contact to substrate.

This sequence belongs to the tRNA pseudouridine synthase TruA family. Homodimer.

It carries out the reaction uridine(38/39/40) in tRNA = pseudouridine(38/39/40) in tRNA. Functionally, formation of pseudouridine at positions 38, 39 and 40 in the anticodon stem and loop of transfer RNAs. This chain is tRNA pseudouridine synthase A, found in Methylocella silvestris (strain DSM 15510 / CIP 108128 / LMG 27833 / NCIMB 13906 / BL2).